The sequence spans 349 residues: MLIAQRPTLVEDPISEFRSRFVIEPLEPGFGYTLGNSLRRTLLSSIPGASVTSIRIDGVLHEFSTVPGVKEDVTDLILNLKELVVSSDNDEPTVMYLRKQGPGEVTAADIAPPAGVEVHSPELRLATLNDKGKLEIELTVERGRGYVSAAQNKQAGQEIGRIPIDSIYSPVLKVTYKVEATRVEQRTDFDRLIVDVETKPSISPRDAMASAGKTLVGLFGLAQELNAEAEGVDIGPSAADAALAADLALPIEEMDLTVRSYNCLKREGIHTIGELVSRSEADLLDIRNFGQKSIDEVKTKLGAMGLQLKDSPPGFDPRQAVDTYGTDSYNPAFSDPSDDGAEFVETEQY.

Positions 1–226 (MLIAQRPTLV…GLFGLAQELN (226 aa)) are alpha N-terminal domain (alpha-NTD). The interval 241-349 (AALAADLALP…GAEFVETEQY (109 aa)) is alpha C-terminal domain (alpha-CTD). Residues 308–349 (LKDSPPGFDPRQAVDTYGTDSYNPAFSDPSDDGAEFVETEQY) are disordered. The span at 336–349 (PSDDGAEFVETEQY) shows a compositional bias: acidic residues.

This sequence belongs to the RNA polymerase alpha chain family. As to quaternary structure, homodimer. The RNAP catalytic core consists of 2 alpha, 1 beta, 1 beta' and 1 omega subunit. When a sigma factor is associated with the core the holoenzyme is formed, which can initiate transcription.

The catalysed reaction is RNA(n) + a ribonucleoside 5'-triphosphate = RNA(n+1) + diphosphate. In terms of biological role, DNA-dependent RNA polymerase catalyzes the transcription of DNA into RNA using the four ribonucleoside triphosphates as substrates. The protein is DNA-directed RNA polymerase subunit alpha of Frankia alni (strain DSM 45986 / CECT 9034 / ACN14a).